The chain runs to 813 residues: Leucine--tRNA ligase (813 aa).

The 'HIGH' region motif lies at 41–51 (PYPSGTLHMGH). The short motif at 575-579 (KMSKS) is the 'KMSKS' region element. K578 contributes to the ATP binding site.

This sequence belongs to the class-I aminoacyl-tRNA synthetase family.

The protein localises to the cytoplasm. The enzyme catalyses tRNA(Leu) + L-leucine + ATP = L-leucyl-tRNA(Leu) + AMP + diphosphate. The protein is Leucine--tRNA ligase of Francisella tularensis subsp. tularensis (strain FSC 198).